Reading from the N-terminus, the 525-residue chain is MADTHTQRPRPVALLILDGYGQNDDTEYNAVYSARTPVMDALKQRYPSTLLHTDGKYVGLPDGQMGNSEVGHMNLGAGRIVYQDFTRITKAIEDNELASNPVLTAPIDAAVAAGRAVHLLGLLSPGGVHSHEDHILAVAALAAERGAKHVYLHAFLDGRDTAPKSARASLERANARLAELFGADNAYVASIVGRYYAMDRDNRWDRVEQAYRVIVEGEGSQVATSAEAGLDAAYERGETDEFVAATSIRPHGEPVRMADGDAALFLNFRADRARELTRAFVEDDFSGFTRQARPKLAHEGLVMLTEYAADIPAPVAFPPTDLVNTLGETVAKRGLKQLRIAETEKYAHVTFFFSGGREDEFEGEHRELIPSPQDVKTYDEKPEMSAYELTDKLVAAIDAGTYDLIVCNYANGDMVGHSGNFDAAVKAIEAVDDCLGRVIEAIERAGGECLVTADHGNAEQMVHPETGNPQTAHTTFQVPLIYVTPRQGATLADDGSLCDLAPTLLTMMHEPVPEEMTGRVLIGNT.

Residues Asp18 and Ser68 each contribute to the Mn(2+) site. Ser68 serves as the catalytic Phosphoserine intermediate. Substrate-binding positions include His129, 159-160 (RD), Arg194, Arg200, 269-272 (RADR), and Lys345. Mn(2+) is bound by residues Asp413, His417, Asp454, His455, and His473.

It belongs to the BPG-independent phosphoglycerate mutase family. Monomer. Mn(2+) is required as a cofactor.

It carries out the reaction (2R)-2-phosphoglycerate = (2R)-3-phosphoglycerate. It functions in the pathway carbohydrate degradation; glycolysis; pyruvate from D-glyceraldehyde 3-phosphate: step 3/5. Functionally, catalyzes the interconversion of 2-phosphoglycerate and 3-phosphoglycerate. In Chromohalobacter salexigens (strain ATCC BAA-138 / DSM 3043 / CIP 106854 / NCIMB 13768 / 1H11), this protein is 2,3-bisphosphoglycerate-independent phosphoglycerate mutase.